Reading from the N-terminus, the 95-residue chain is Small ribosomal subunit protein bS6 (95 aa).

It belongs to the bacterial ribosomal protein bS6 family.

In terms of biological role, binds together with bS18 to 16S ribosomal RNA. This Onion yellows phytoplasma (strain OY-M) protein is Small ribosomal subunit protein bS6.